We begin with the raw amino-acid sequence, 247 residues long: Uridylate kinase (247 aa).

Residue 14 to 17 participates in ATP binding; the sequence is KLSG. Residues 22 to 27 are involved in allosteric activation by GTP; the sequence is GERGVG. A UMP-binding site is contributed by G56. Residues G57 and R61 each contribute to the ATP site. Residues D76 and 137 to 144 contribute to the UMP site; that span reads IGSPYFST. ATP contacts are provided by N165, Y171, and D174.

The protein belongs to the UMP kinase family. In terms of assembly, homohexamer.

The protein localises to the cytoplasm. It carries out the reaction UMP + ATP = UDP + ADP. It participates in pyrimidine metabolism; CTP biosynthesis via de novo pathway; UDP from UMP (UMPK route): step 1/1. Allosterically activated by GTP. Inhibited by UTP. Its function is as follows. Catalyzes the reversible phosphorylation of UMP to UDP. The polypeptide is Uridylate kinase (Streptococcus pneumoniae (strain ATCC BAA-255 / R6)).